A 368-amino-acid polypeptide reads, in one-letter code: uncharacterized protein (368 aa).

Disordered stretches follow at residues 1–22 (MEKS…LPEK) and 282–317 (KHLG…EPPA). Residues 293-311 (KRVEKMKKAYKESKEEKAS) are compositionally biased toward basic and acidic residues.

This is an uncharacterized protein from Mus musculus (Mouse).